Here is a 74-residue protein sequence, read N- to C-terminus: Small ribosomal subunit protein bS18 (74 aa).

This sequence belongs to the bacterial ribosomal protein bS18 family. Part of the 30S ribosomal subunit. Forms a tight heterodimer with protein bS6.

Functionally, binds as a heterodimer with protein bS6 to the central domain of the 16S rRNA, where it helps stabilize the platform of the 30S subunit. This is Small ribosomal subunit protein bS18 from Gloeobacter violaceus (strain ATCC 29082 / PCC 7421).